Consider the following 410-residue polypeptide: MPQEVKRCVLAYSGGLDTSCILAWLIEEGWEVICYMANVGQEEDWDAAREKALKVGAKKVYVEDLREEFINDTVIPAAQANAIYENVYLLGTSLARPIIARRQIQIAEKENCIAVSHGCTGKGNDQVRFELAYYALKPDVQVIAPWRLPVFFERFAGRKDLLEYAAAKGIPVTQTTKKPWSMDENIVHCSYEAGILEDPSMTPPKDMWKLTVDPKDAPDEVEELSIHFEKGAPTKLECKDGTFSGVVSIFYQLNAIARRNGVGRIDIVENRFSGLKSRGCYETPGLTILRTAHMDLEGLTMEREVRALRDQFVTFNLAKILYNGQFFSPCTRMLLAANNVSQEVVNGVVKLSVYKGNVTVLGRKSDTAHLYDEKLSSMDELGGFDPTWTSGFIQIESMRLRNSDEGKHWM.

ATP is bound by residues 11–19 (AYSGGLDTS) and Ala-37. L-citrulline-binding residues include Tyr-88 and Ser-93. 116–124 (SHGCTGKGN) lines the ATP pocket. Residues Thr-120, Asn-124, and Asp-125 each coordinate L-aspartate. An L-citrulline-binding site is contributed by Asn-124. Arg-128, Ser-181, Ser-190, Glu-269, and Tyr-281 together coordinate L-citrulline.

It belongs to the argininosuccinate synthase family. Type 1 subfamily. As to quaternary structure, homotetramer.

It is found in the cytoplasm. It catalyses the reaction L-citrulline + L-aspartate + ATP = 2-(N(omega)-L-arginino)succinate + AMP + diphosphate + H(+). It functions in the pathway amino-acid biosynthesis; L-arginine biosynthesis; L-arginine from L-ornithine and carbamoyl phosphate: step 2/3. The sequence is that of Argininosuccinate synthase (arg12) from Schizosaccharomyces pombe (strain 972 / ATCC 24843) (Fission yeast).